The primary structure comprises 310 residues: Aspartate carbamoyltransferase catalytic subunit (310 aa).

Positions 57 and 58 each coordinate carbamoyl phosphate. K86 serves as a coordination point for L-aspartate. Carbamoyl phosphate contacts are provided by R107, H135, and Q138. R168 and R229 together coordinate L-aspartate. Positions 268 and 269 each coordinate carbamoyl phosphate.

The protein belongs to the aspartate/ornithine carbamoyltransferase superfamily. ATCase family. Heterooligomer of catalytic and regulatory chains.

The catalysed reaction is carbamoyl phosphate + L-aspartate = N-carbamoyl-L-aspartate + phosphate + H(+). Its pathway is pyrimidine metabolism; UMP biosynthesis via de novo pathway; (S)-dihydroorotate from bicarbonate: step 2/3. Functionally, catalyzes the condensation of carbamoyl phosphate and aspartate to form carbamoyl aspartate and inorganic phosphate, the committed step in the de novo pyrimidine nucleotide biosynthesis pathway. The protein is Aspartate carbamoyltransferase catalytic subunit of Thermococcus kodakarensis (strain ATCC BAA-918 / JCM 12380 / KOD1) (Pyrococcus kodakaraensis (strain KOD1)).